A 420-amino-acid polypeptide reads, in one-letter code: O-methyltransferase opaF (420 aa).

S-adenosyl-L-methionine-binding positions include 262 to 263, aspartate 287, and 308 to 309; these read GG and DL. The Proton acceptor role is filled by histidine 328.

It belongs to the class I-like SAM-binding methyltransferase superfamily. Cation-independent O-methyltransferase family.

It participates in secondary metabolite biosynthesis. O-methyltransferase; part of the gene cluster that mediates the biosynthesis of oxepinamides, derivatives of anthranilyl-containing tripeptides that share an oxepin ring and a fused pyrimidinone moiety. The nonribosomal peptide synthetase (NRPS) opaA assembles the quinazolinone core with D-Phe incorporation. The first adenylation domain (A1) of opaA loads and activates anthranilic acid whereas the second A domain (A2) is for activating of L-Phe, which is then converted to D-form by the E domain. The third A domain (A3) is responsible for L-Ile activation and the terminal condensation domain C3 for cyclization and releasing the NRPS product protuboxepin K. The cytochrome P450 monooxygenase opaB then catalyzes alone the oxepin ring formation to convert protuboxepin K into protuboxepin A. The flavoenzyme opaC installs subsequently one hydroxyl group at the oxepin ring, accompanied by double bond migration, to form 15-epi-oxepinamide E. The epimerase opaE changes the D-Phe residue back to L-form, leading to oxepinamide E, which is further methylated at the hydroxyl group at C-12 by the O-methyltransferase OpaF to yield oxepinamide F. In Aspergillus ustus, this protein is O-methyltransferase opaF.